The chain runs to 96 residues: Cysteine proteinase (96 aa).

A disulfide bridge links Cys25 with Cys79. Active-site residues include His31 and Asn58.

Belongs to the peptidase C1 family.

In Carica papaya (Papaya), this protein is Cysteine proteinase.